A 454-amino-acid polypeptide reads, in one-letter code: MKLATAFTILTAVLAAPLAAPAPAPDAAPAAVPEGPAAAAYSSILSVVAKQSKKFKHHKRDLDEKDQFIVVFDSSATVDQIASEIQKLDSLVDEDSSNGITSALDLPVYTDGSGFLGFVGKFNSTIVDKLKESSVLTVEPDTIVSLPEIPASSNAKRAIQTTPVTQWGLSRISHKKAQTGNYAYVRETVGKHPTVSYVVDSGIRTTHSEFGGRAVWGANFADTQNADLLGHGTHVAGTVGGKTYGVDANTKLVAVKVFAGRSAALSVINQGFTWALNDYISKRDTLPRGVLNFSGGGPKSASQDALWSRATQEGLLVAIAAGNDAVDACNDSPGNIGGSTSGIITVGSIDSSDKISVWSGGQGSNYGTCVDVFAPGSDIISASYQSDSGTLVYSGTSMACPHVAGLASYYLSINDEVLTPAQVEALITESNTGVLPTTNLKGSPNAVAYNGVGI.

Residues 1–15 (MKLATAFTILTAVLA) form the signal peptide. Residues 16-157 (APLAAPAPAP…EIPASSNAKR (142 aa)) constitute a propeptide that is removed on maturation. The region spanning 68 to 146 (FIVVFDSSAT…TVEPDTIVSL (79 aa)) is the Inhibitor I9 domain. The N-linked (GlcNAc...) asparagine glycan is linked to Asn123. In terms of domain architecture, Peptidase S8 spans 166-454 (QWGLSRISHK…NAVAYNGVGI (289 aa)). Residues Asp200, His231, and Ser397 each act as charge relay system in the active site.

It belongs to the peptidase S8 family. Post-translationally, the pro-region is removed through cleavage by XPR6 after Lys156-Arg157, which yields mature active XPR2. The 10 consecutive -X-Ala- or -X-Pro- dipeptides located over 100 amino acids upstream of the N-terminal of mature XPR2 are subject to dipeptidyl aminopeptidase (DPAPase)-processing. DPAPase activity is not necessary for XPR6 cleavage and for secretion of mature active XPR2. In terms of processing, N-glycosylated. Glycosylation within the pro-region has no effect on secretion and maturation at 18 degrees Celsius, but is required for secretion at 28 degrees Celsius.

It localises to the secreted. The catalysed reaction is Hydrolysis of proteins with broad specificity for peptide bonds, and a preference for a large uncharged residue in P1. Hydrolyzes peptide amides.. With respect to regulation, the protease activity is completely inhibited by the serine inhibitor PMSF but is not affected by thiol group inhibitors and in the presence of dithiothreitol. In the presence of high concentrations of o-phenanthroline the protease activity is only partially inhibited. The pro-region plays an inhibitory role and may provide a mechanism for preventing premature activation in the secretory pathway. Its function is as follows. Major secreted protein that belongs to the subtilisin family serine proteases. The chain is Alkaline extracellular protease from Yarrowia lipolytica (strain CLIB 122 / E 150) (Yeast).